Here is a 103-residue protein sequence, read N- to C-terminus: UPF0473 protein SSA_2239 (103 aa).

Belongs to the UPF0473 family.

In Streptococcus sanguinis (strain SK36), this protein is UPF0473 protein SSA_2239.